We begin with the raw amino-acid sequence, 466 residues long: Uronate isomerase (466 aa).

Belongs to the metallo-dependent hydrolases superfamily. Uronate isomerase family.

It catalyses the reaction D-glucuronate = D-fructuronate. It carries out the reaction aldehydo-D-galacturonate = keto-D-tagaturonate. The protein operates within carbohydrate metabolism; pentose and glucuronate interconversion. The polypeptide is Uronate isomerase (Lachnoclostridium phytofermentans (strain ATCC 700394 / DSM 18823 / ISDg) (Clostridium phytofermentans)).